We begin with the raw amino-acid sequence, 507 residues long: WD repeat-containing protein fzy-1 (507 aa).

Disordered stretches follow at residues 1-39 (MNNK…NTNL) and 74-95 (NKEN…SVEG). Polar residues-rich tracts occupy residues 15–24 (VRSSAQQNGL) and 74–86 (NKEN…SEPN). 4 WD repeats span residues 219–258 (TNEG…TTEY), 313–352 (GHCR…GSTV), 364–406 (EHTG…QKVR), and 411–450 (CETG…KLSH).

It belongs to the WD repeat CDC20/Fizzy family.

It localises to the chromosome. It is found in the cytoplasm. Plays a role in metaphase-anaphase transition during meiosis I. Required for embryonic anterior-posterior axis formation. In Caenorhabditis elegans, this protein is WD repeat-containing protein fzy-1.